The sequence spans 177 residues: Large ribosomal subunit protein uL6 (177 aa).

This sequence belongs to the universal ribosomal protein uL6 family. Part of the 50S ribosomal subunit.

Functionally, this protein binds to the 23S rRNA, and is important in its secondary structure. It is located near the subunit interface in the base of the L7/L12 stalk, and near the tRNA binding site of the peptidyltransferase center. This chain is Large ribosomal subunit protein uL6, found in Edwardsiella ictaluri (strain 93-146).